The following is a 172-amino-acid chain: PRELI domain containing protein 3A (172 aa).

A PRELI/MSF1 domain is found at 1 to 172 (MKIWSSEHVF…IIEHSESAVS (172 aa)).

The protein belongs to the slowmo family. As to quaternary structure, interacts with TRIAP1.

It is found in the mitochondrion. In vitro, the TRIAP1:PRELID3A complex mediates the transfer of phosphatidic acid (PA) between liposomes and probably functions as a PA transporter across the mitochondrion intermembrane space. Phosphatidic acid import is required for cardiolipin (CL) synthesis in the mitochondrial inner membrane. This chain is PRELI domain containing protein 3A (PRELID3A), found in Homo sapiens (Human).